The sequence spans 306 residues: Ornithine carbamoyltransferase (306 aa).

Residues 51–54, Q78, R102, and 129–132 contribute to the carbamoyl phosphate site; these read STRT and HPCQ. L-ornithine contacts are provided by residues N160, D223, and 227–228; that span reads SM. Residues 263–264 and R291 contribute to the carbamoyl phosphate site; that span reads CL.

The protein belongs to the aspartate/ornithine carbamoyltransferase superfamily. OTCase family.

It localises to the cytoplasm. The catalysed reaction is carbamoyl phosphate + L-ornithine = L-citrulline + phosphate + H(+). It participates in amino-acid biosynthesis; L-arginine biosynthesis; L-arginine from L-ornithine and carbamoyl phosphate: step 1/3. In terms of biological role, reversibly catalyzes the transfer of the carbamoyl group from carbamoyl phosphate (CP) to the N(epsilon) atom of ornithine (ORN) to produce L-citrulline. This Trichormus variabilis (strain ATCC 29413 / PCC 7937) (Anabaena variabilis) protein is Ornithine carbamoyltransferase.